Reading from the N-terminus, the 391-residue chain is MKLNPNDVVIIDAVRSPMGKTKNGVFRNVRAENLSAALVKELFKRNPNVDQKDVEDLIWGCVNQTLEQGFNMARAVSLLAGLPITCAAQTVNRLCGSSMSAIHTAAQAIMTGQGDVFVVGGVEHMGHVGMMHGVDVNPALSKHMAKASMMMGVTAEMLGKMHGVSREDQDAFAVRSHRLAHEATLQGRFNNEIVSIEGHDADGNKILVEVDEVIRPETSMESLAKLAPVFMPKVGTVTAGTSSALSDGASAMLMMSAKKAEELGLTPIAKVRSMAVAGCDPAIMGYGPVPATKKALKRAGLTIADIDIVELNEAFAAQSIPVLKDLGLLDLVDDKVNLNGGAIALGHPLGCSGTRISTTLLNVMREKDATVGLATMCIGMGQGIATVFERV.

Catalysis depends on C95, which acts as the Acyl-thioester intermediate. Active-site proton acceptor residues include H347 and C377.

It belongs to the thiolase-like superfamily. Thiolase family. As to quaternary structure, heterotetramer of two alpha chains (FadB) and two beta chains (FadA).

The protein resides in the cytoplasm. The catalysed reaction is an acyl-CoA + acetyl-CoA = a 3-oxoacyl-CoA + CoA. It functions in the pathway lipid metabolism; fatty acid beta-oxidation. Its function is as follows. Catalyzes the final step of fatty acid oxidation in which acetyl-CoA is released and the CoA ester of a fatty acid two carbons shorter is formed. The sequence is that of 3-ketoacyl-CoA thiolase from Marinomonas sp. (strain MWYL1).